The sequence spans 476 residues: Serine/threonine-protein kinase Chk1 (476 aa).

The tract at residues 1–265 (MAVPFVEDWD…IPDIKKDRWY (265 aa)) is interaction with CLSPN. The region spanning 9 to 265 (WDLVQTLGEG…IPDIKKDRWY (257 aa)) is the Protein kinase domain. ATP is bound by residues 15-23 (LGEGAYGEV) and lysine 38. The Proton acceptor role is filled by aspartate 130. Residue lysine 132 forms a Glycyl lysine isopeptide (Lys-Gly) (interchain with G-Cter in ubiquitin) linkage. Residues 267–329 (KPLNRGAKRP…EPRTGLSLWD (63 aa)) form a disordered region. Serine 280 carries the phosphoserine; by PKB/AKT1 modification. Residues 280–291 (SGGMSESSSGFS) show a composition bias toward low complexity. Phosphoserine occurs at positions 286, 296, and 301. Positions 298 to 320 (LDFSPINSGSSEENVKFSSSQPE) are enriched in polar residues. A phosphoserine; by ATM and ATR mark is found at serine 317 and serine 345. Positions 391 to 476 (QCLKETFEKL…SSQKVWFPVT (86 aa)) are autoinhibitory region. Lysine 436 is covalently cross-linked (Glycyl lysine isopeptide (Lys-Gly) (interchain with G-Cter in ubiquitin)). A phosphoserine mark is found at serine 463, serine 467, and serine 468.

This sequence belongs to the protein kinase superfamily. CAMK Ser/Thr protein kinase family. NIM1 subfamily. Interacts (phosphorylated by ATR) with RAD51. Interacts with and phosphorylates CLSPN, an adapter protein that regulates the ATR-dependent phosphorylation of CHEK1. Interacts with BRCA1. Interacts with and phosphorylates CDC25A, CDC25B and CDC25C. Interacts with FBXO6, which regulates CHEK1. Interacts with PPM1D, which regulates CHEK1 through dephosphorylation. Interacts with TIMELESS; DNA damage-dependent. Interacts with FEM1B; activates CHEK1 in response to stress. Interacts with TLK1. Interacts with XPO1 and YWHAZ. Interacts with CDK5RAP3; antagonizes CHEK1. Post-translationally, phosphorylated by ATR in a RAD17-dependent manner in response to ultraviolet irradiation and inhibition of DNA replication. Phosphorylated by ATM in response to ionizing irradiation. ATM and ATR can both phosphorylate Ser-317 and Ser-345 and this results in enhanced kinase activity. Phosphorylation at Ser-345 induces a change in the conformation of the protein, activates the kinase activity and is a prerequisite for interaction with FBXO6 and subsequent ubiquitination at Lys-436. Phosphorylation at Ser-345 also increases binding to 14-3-3 proteins and promotes nuclear retention. Conversely, dephosphorylation at Ser-345 by PPM1D may contribute to exit from checkpoint mediated cell cycle arrest. Phosphorylation at Ser-280 by AKT1/PKB, may promote mono and/or diubiquitination. Also phosphorylated at undefined residues during mitotic arrest, resulting in decreased activity. In terms of processing, ubiquitinated. Mono or diubiquitination promotes nuclear exclusion. The activated form (phosphorylated on Ser-345) is polyubiquitinated at Lys-436 by some SCF-type E3 ubiquitin ligase complex containing FBXO6 promoting its degradation. Ubiquitination and degradation are required to terminate the checkpoint and ensure that activated CHEK1 does not accumulate as cells progress through S phase, when replication forks encounter transient impediments during normal DNA replication. 'Lys-63'-mediated ubiquitination by TRAF4 at Lys-132 activates cell cycle arrest and activation of DNA repair. Proteolytically cleaved at the C-terminus by SPRTN during normal DNA replication, thereby promoting CHEK1 removal from chromatin and activating the protein kinase activity. Expressed in brain, heart, liver, lung, skeletal muscle, spleen and testis. As to expression, expressed only in liver.

It is found in the nucleus. The protein resides in the chromosome. It localises to the cytoplasm. Its subcellular location is the cytoskeleton. The protein localises to the microtubule organizing center. It is found in the centrosome. The enzyme catalyses L-seryl-[protein] + ATP = O-phospho-L-seryl-[protein] + ADP + H(+). The catalysed reaction is L-threonyl-[protein] + ATP = O-phospho-L-threonyl-[protein] + ADP + H(+). Activated through phosphorylation predominantly by ATR but also by ATM in response to DNA damage or inhibition of DNA replication. Activation is modulated by several mediators including CLSPN, BRCA1 and FEM1B. Proteolytic cleavage at the C-terminus by SPRTN during normal DNA replication activates the protein kinase activity. Its function is as follows. Serine/threonine-protein kinase which is required for checkpoint-mediated cell cycle arrest and activation of DNA repair in response to the presence of DNA damage or unreplicated DNA. May also negatively regulate cell cycle progression during unperturbed cell cycles. This regulation is achieved by a number of mechanisms that together help to preserve the integrity of the genome. Recognizes the substrate consensus sequence [R-X-X-S/T]. Binds to and phosphorylates CDC25A, CDC25B and CDC25C. Phosphorylation of CDC25A at 'Ser-178' and 'Thr-507' and phosphorylation of CDC25C at 'Ser-216' creates binding sites for 14-3-3 proteins which inhibit CDC25A and CDC25C. Phosphorylation of CDC25A at 'Ser-76', 'Ser-124', 'Ser-178', 'Ser-279' and 'Ser-293' promotes proteolysis of CDC25A. Phosphorylation of CDC25A at 'Ser-76' primes the protein for subsequent phosphorylation at 'Ser-79', 'Ser-82' and 'Ser-88' by NEK11, which is required for polyubiquitination and degradation of CDCD25A. Inhibition of CDC25 leads to increased inhibitory tyrosine phosphorylation of CDK-cyclin complexes and blocks cell cycle progression. Also phosphorylates NEK6. Binds to and phosphorylates RAD51 at 'Thr-309', which promotes the release of RAD51 from BRCA2 and enhances the association of RAD51 with chromatin, thereby promoting DNA repair by homologous recombination. Phosphorylates multiple sites within the C-terminus of TP53, which promotes activation of TP53 by acetylation and promotes cell cycle arrest and suppression of cellular proliferation. Also promotes repair of DNA cross-links through phosphorylation of FANCE. Binds to and phosphorylates TLK1 at 'Ser-743', which prevents the TLK1-dependent phosphorylation of the chromatin assembly factor ASF1A. This may enhance chromatin assembly both in the presence or absence of DNA damage. May also play a role in replication fork maintenance through regulation of PCNA. May regulate the transcription of genes that regulate cell-cycle progression through the phosphorylation of histones. Phosphorylates histone H3.1 (to form H3T11ph), which leads to epigenetic inhibition of a subset of genes. May also phosphorylate RB1 to promote its interaction with the E2F family of transcription factors and subsequent cell cycle arrest. Phosphorylates SPRTN, promoting SPRTN recruitment to chromatin. Reduces replication stress and activates the G2/M checkpoint, by phosphorylating and inactivating PABIR1/FAM122A and promoting the serine/threonine-protein phosphatase 2A-mediated dephosphorylation and stabilization of WEE1 levels and activity. This is Serine/threonine-protein kinase Chk1 (Chek1) from Rattus norvegicus (Rat).